Consider the following 130-residue polypeptide: Small ribosomal subunit protein uS8 (130 aa).

It belongs to the universal ribosomal protein uS8 family. Part of the 30S ribosomal subunit. Contacts proteins S5 and S12.

One of the primary rRNA binding proteins, it binds directly to 16S rRNA central domain where it helps coordinate assembly of the platform of the 30S subunit. The polypeptide is Small ribosomal subunit protein uS8 (Pseudomonas fluorescens (strain Pf0-1)).